A 151-amino-acid chain; its full sequence is Non-specific lipid transfer protein GPI-anchored 30 (151 aa).

The signal sequence occupies residues 1–22; sequence MMMGMKFFSFYVVLLLVAASSG. Disulfide bonds link Cys-32–Cys-69, Cys-39–Cys-53, Cys-54–Cys-97, and Cys-67–Cys-106. Asn-44 carries an N-linked (GlcNAc...) asparagine glycan. The GPI-anchor amidated serine moiety is linked to residue Ser-120. A propeptide spans 121–151 (removed in mature form); the sequence is SSIGNTFSQSYWMTTLAIAATVLSYCHHIIS.

It belongs to the plant LTP family. In terms of tissue distribution, expressed in vascular tissues of all organs. Expressed in seedlings, preferentially in hypocotyls and roots. Also observed in siliques.

It localises to the cell membrane. Its function is as follows. Lipid transfer protein that promotes the number of phloem (pro)cambial and pericycle cells. This is Non-specific lipid transfer protein GPI-anchored 30 from Arabidopsis thaliana (Mouse-ear cress).